Here is a 586-residue protein sequence, read N- to C-terminus: Glutathione S-transferase C-terminal domain-containing protein homolog (586 aa).

One can recognise a GST C-terminal domain in the interval 121–276 (LGFKESCLLA…GTCAKILGDL (156 aa)).

This sequence belongs to the GSTCD family.

The protein is Glutathione S-transferase C-terminal domain-containing protein homolog of Drosophila pseudoobscura pseudoobscura (Fruit fly).